A 145-amino-acid polypeptide reads, in one-letter code: D-aminoacyl-tRNA deacylase (145 aa).

The Gly-cisPro motif, important for rejection of L-amino acids motif lies at 137–138 (GP).

The protein belongs to the DTD family. As to quaternary structure, homodimer.

It is found in the cytoplasm. It carries out the reaction glycyl-tRNA(Ala) + H2O = tRNA(Ala) + glycine + H(+). It catalyses the reaction a D-aminoacyl-tRNA + H2O = a tRNA + a D-alpha-amino acid + H(+). Functionally, an aminoacyl-tRNA editing enzyme that deacylates mischarged D-aminoacyl-tRNAs. Also deacylates mischarged glycyl-tRNA(Ala), protecting cells against glycine mischarging by AlaRS. Acts via tRNA-based rather than protein-based catalysis; rejects L-amino acids rather than detecting D-amino acids in the active site. By recycling D-aminoacyl-tRNA to D-amino acids and free tRNA molecules, this enzyme counteracts the toxicity associated with the formation of D-aminoacyl-tRNA entities in vivo and helps enforce protein L-homochirality. The protein is D-aminoacyl-tRNA deacylase of Dichelobacter nodosus (strain VCS1703A).